The chain runs to 296 residues: F-box only protein 2 (296 aa).

The segment at 1 to 41 (MDGDGDPESVGQPEEASPEEQPEEASAEEERPEDQQEEEAA) is disordered. Residues 16-40 (ASPEEQPEEASAEEERPEDQQEEEA) are compositionally biased toward acidic residues. The F-box domain maps to 44–91 (AAYLDELPEPLLLRVLAALPAAELVQACRLVCLRWKELVDGAPLWLLK). Residues 113-296 (FYFLSKRRRN…VTNSSVWVEP (184 aa)) enclose the FBA domain. Residues 210–212 (RSD) and 278–279 (YW) each bind a carbohydrate.

Component of the SCF(FBXO2) complex consisting of CUL1, RBX1, SKP1 and FBXO2. Predominantly detected as heterodimer with SKP1; the heterodimer with SKP1 is not part of the SCF(FBXO2) complex.

It localises to the cytoplasm. The protein localises to the microsome membrane. The protein operates within protein modification; protein ubiquitination. Substrate recognition component of a SCF (SKP1-CUL1-F-box protein) E3 ubiquitin-protein ligase complex that mediates the ubiquitination and subsequent proteasomal degradation of target proteins. Involved in the endoplasmic reticulum-associated degradation pathway (ERAD) for misfolded lumenal proteins by recognizing and binding sugar chains on unfolded glycoproteins that are retrotranslocated into the cytosol and promoting their ubiquitination and subsequent degradation. Prevents formation of cytosolic aggregates of unfolded glycoproteins that have been retrotranslocated into the cytosol. Able to recognize and bind denatured glycoproteins, preferentially those of the high-mannose type. In Homo sapiens (Human), this protein is F-box only protein 2 (FBXO2).